Consider the following 393-residue polypeptide: S-adenosylmethionine synthase 1 (393 aa).

Residue E9 participates in Mg(2+) binding. H15 contributes to the ATP binding site. E43 contacts K(+). L-methionine contacts are provided by E56 and Q99. Residues 167–169 (DGK), 235–238 (SGRF), D246, 252–253 (RK), A269, K273, and K277 contribute to the ATP site. D246 lines the L-methionine pocket. K277 serves as a coordination point for L-methionine.

It belongs to the AdoMet synthase family. Homotetramer. Requires Mn(2+) as cofactor. The cofactor is Mg(2+). Co(2+) is required as a cofactor. It depends on K(+) as a cofactor. NH4(+) serves as cofactor. Mostly expressed in roots, and, to a lower extent, in hypocotyls and cotyledons.

It is found in the cytoplasm. The catalysed reaction is L-methionine + ATP + H2O = S-adenosyl-L-methionine + phosphate + diphosphate. It participates in amino-acid biosynthesis; S-adenosyl-L-methionine biosynthesis; S-adenosyl-L-methionine from L-methionine: step 1/1. Inhibited by products of SAMS reaction (SAM, Pi, PPi), substrate analogs (cycloleucine and ethionine), and alternative nucleotides (GTP, CTP and ADP). Strongly repressed by PPPi. Its function is as follows. Catalyzes the formation of S-adenosylmethionine from methionine and ATP. The reaction comprises two steps that are both catalyzed by the same enzyme: formation of S-adenosylmethionine (AdoMet) and triphosphate, and subsequent hydrolysis of the triphosphate. In Catharanthus roseus (Madagascar periwinkle), this protein is S-adenosylmethionine synthase 1 (SAMS1).